The chain runs to 400 residues: Lysophospholipid transporter LplT (400 aa).

11 helical membrane-spanning segments follow: residues 19–39 (VIVA…ATLA), 53–73 (VLQM…GQIA), 91–111 (AGAA…LVGI), 139–159 (LMEA…GVLA), 164–184 (IAAL…NLFI), 227–247 (LFWG…PVAL), 257–277 (YLNA…AKLV), 281–301 (TVSR…IFSL), 304–324 (ALLP…FFVV), 352–372 (NSAM…GVPA), and 373–393 (VAIG…LWIW).

The protein belongs to the major facilitator superfamily. LplT (TC 2.A.1.42) family.

The protein resides in the cell inner membrane. In terms of biological role, catalyzes the facilitated diffusion of 2-acyl-glycero-3-phosphoethanolamine (2-acyl-GPE) into the cell. In Salmonella gallinarum (strain 287/91 / NCTC 13346), this protein is Lysophospholipid transporter LplT.